We begin with the raw amino-acid sequence, 320 residues long: Cytochrome f (320 aa).

The signal sequence occupies residues 1–35 (MRNINTYDWMKKWMTRSISILVMIHMITRTSISNA). Heme-binding residues include Tyr36, Cys56, Cys59, and His60. Residues 286 to 306 (VQGLLLLLASVILAQIFLVLK) traverse the membrane as a helical segment.

Belongs to the cytochrome f family. In terms of assembly, the 4 large subunits of the cytochrome b6-f complex are cytochrome b6, subunit IV (17 kDa polypeptide, petD), cytochrome f and the Rieske protein, while the 4 small subunits are PetG, PetL, PetM and PetN. The complex functions as a dimer. It depends on heme as a cofactor.

It is found in the plastid. The protein resides in the chloroplast thylakoid membrane. Functionally, component of the cytochrome b6-f complex, which mediates electron transfer between photosystem II (PSII) and photosystem I (PSI), cyclic electron flow around PSI, and state transitions. This chain is Cytochrome f, found in Cycas taitungensis (Prince sago).